Consider the following 280-residue polypeptide: Putative pyruvate, phosphate dikinase regulatory protein (280 aa).

156-163 is an ADP binding site; sequence GVSRTSKT.

The protein belongs to the pyruvate, phosphate/water dikinase regulatory protein family. PDRP subfamily.

The catalysed reaction is N(tele)-phospho-L-histidyl/L-threonyl-[pyruvate, phosphate dikinase] + ADP = N(tele)-phospho-L-histidyl/O-phospho-L-threonyl-[pyruvate, phosphate dikinase] + AMP + H(+). The enzyme catalyses N(tele)-phospho-L-histidyl/O-phospho-L-threonyl-[pyruvate, phosphate dikinase] + phosphate + H(+) = N(tele)-phospho-L-histidyl/L-threonyl-[pyruvate, phosphate dikinase] + diphosphate. Bifunctional serine/threonine kinase and phosphorylase involved in the regulation of the pyruvate, phosphate dikinase (PPDK) by catalyzing its phosphorylation/dephosphorylation. This Hyphomonas neptunium (strain ATCC 15444) protein is Putative pyruvate, phosphate dikinase regulatory protein.